Consider the following 369-residue polypeptide: Chaperone protein DnaJ (369 aa).

A J domain is found at 5 to 70 (DYYEVLGVGR…NKRAAYDQFG (66 aa)). The CR-type zinc-finger motif lies at 128 to 206 (GAETQIRIPR…CHGAGWVKRQ (79 aa)). Positions 141, 144, 158, 161, 180, 183, 194, and 197 each coordinate Zn(2+). CXXCXGXG motif repeat units lie at residues 141–148 (CDTCHGSG), 158–165 (CPTCNGHG), 180–187 (CSHCQGSG), and 194–201 (CGDCHGAG).

It belongs to the DnaJ family. In terms of assembly, homodimer. It depends on Zn(2+) as a cofactor.

The protein resides in the cytoplasm. Participates actively in the response to hyperosmotic and heat shock by preventing the aggregation of stress-denatured proteins and by disaggregating proteins, also in an autonomous, DnaK-independent fashion. Unfolded proteins bind initially to DnaJ; upon interaction with the DnaJ-bound protein, DnaK hydrolyzes its bound ATP, resulting in the formation of a stable complex. GrpE releases ADP from DnaK; ATP binding to DnaK triggers the release of the substrate protein, thus completing the reaction cycle. Several rounds of ATP-dependent interactions between DnaJ, DnaK and GrpE are required for fully efficient folding. Also involved, together with DnaK and GrpE, in the DNA replication of plasmids through activation of initiation proteins. This is Chaperone protein DnaJ from Nitrosomonas europaea (strain ATCC 19718 / CIP 103999 / KCTC 2705 / NBRC 14298).